We begin with the raw amino-acid sequence, 351 residues long: MKKQHIINETFLDEILAQKLGTTYIPPTEIKDSDFDKAAKHFINLLLRADGLKPIKTAVVHPIDKESLLGAVRAAQFNVIKPILIGPQHKIESVAKVNDVDLENYQVINAEHSHEAAKKAVELAKKREVAAIMKGALHTDELMSAVVYKENGLRTERRISHAFLMAVATFPKPFIITDAAINIRPTLEDKRDIVQNAIDLMHIIKEDKQVRVAVLSAVETVTSAIPTTLDAAALSKMADRGQITNAVVDGPLAFDNAISLFAAEAKGISSPVSGNADILVVPDLESGNMLAKQLKYLGQAVMAGIVLGARVPIILTSRADPIDMRVISCVLASFIYNQTKAKLHNSSKSII.

Belongs to the phosphate acetyltransferase and butyryltransferase family.

The protein localises to the cytoplasm. It catalyses the reaction acetyl-CoA + phosphate = acetyl phosphate + CoA. It participates in metabolic intermediate biosynthesis; acetyl-CoA biosynthesis; acetyl-CoA from acetate: step 2/2. This Rickettsia prowazekii (strain Madrid E) protein is Phosphate acetyltransferase (pta).